The primary structure comprises 274 residues: Undecaprenyl-diphosphatase (274 aa).

Helical transmembrane passes span 1-21 (MDWFYAIIYGIVEGITEFLPI), 48-68 (VVIQGGAILAVLAYYWRDFAG), 84-104 (LGVIVGVIPAVVLGVLFGDVI), 108-128 (LFRPSVVAWALIVGGVLMWVI), 143-163 (IGLGRAFLIGAAQCLALLWPG), 187-207 (FSFYLGIPTLGGAALLDFIKS), 214-234 (IGLLNVFLGAAVSFVVAYLAI), and 254-274 (VIFGLLILLLVASGRLANGGL).

The protein belongs to the UppP family.

It is found in the cell membrane. It carries out the reaction di-trans,octa-cis-undecaprenyl diphosphate + H2O = di-trans,octa-cis-undecaprenyl phosphate + phosphate + H(+). Catalyzes the dephosphorylation of undecaprenyl diphosphate (UPP). Confers resistance to bacitracin. This chain is Undecaprenyl-diphosphatase, found in Deinococcus geothermalis (strain DSM 11300 / CIP 105573 / AG-3a).